The chain runs to 236 residues: MAKYKRILLKLSGESLMGEKQYGIDEKRLAEYAAQIKEIHEQGVQIGIVIGGGNIFRGLSGANKGFDRVKGDQMGMLATVINSLALSSALVAAGVKARVLTAVRMEPIGEFYSKWKAIECMENGEIVIMSGGTGNPFFTTDTGSSLRGIEIEADVMLKGTRVDGIYTADPEKDPTATKFSDITYDEVLKRGLKVMDLTATCMCKENNLPIVVFDMDTVGNLKKVISGEEIGTVVHN.

Lys-10–Gly-13 provides a ligand contact to ATP. Position 52 (Gly-52) interacts with UMP. The ATP site is built by Gly-53 and Arg-57. UMP contacts are provided by residues Asp-72 and Thr-133 to Thr-140. Positions 160, 166, and 169 each coordinate ATP.

The protein belongs to the UMP kinase family. Homohexamer.

Its subcellular location is the cytoplasm. It carries out the reaction UMP + ATP = UDP + ADP. It functions in the pathway pyrimidine metabolism; CTP biosynthesis via de novo pathway; UDP from UMP (UMPK route): step 1/1. Inhibited by UTP. Functionally, catalyzes the reversible phosphorylation of UMP to UDP. This is Uridylate kinase from Bacteroides thetaiotaomicron (strain ATCC 29148 / DSM 2079 / JCM 5827 / CCUG 10774 / NCTC 10582 / VPI-5482 / E50).